The following is a 458-amino-acid chain: tRNA modification GTPase MnmE (458 aa).

Residues R22, E86, and R125 each contribute to the (6S)-5-formyl-5,6,7,8-tetrahydrofolate site. The TrmE-type G domain maps to 221 to 379; it reads GIRTVILGRP…LEQTITEMFF (159 aa). Residue N231 coordinates K(+). GTP-binding positions include 231–236, 250–256, and 275–278; these read NAGKSS, TEIAGTT, and DTAG. S235 serves as a coordination point for Mg(2+). K(+) contacts are provided by T250, I252, and T255. Residue T256 participates in Mg(2+) binding. K458 is a binding site for (6S)-5-formyl-5,6,7,8-tetrahydrofolate.

This sequence belongs to the TRAFAC class TrmE-Era-EngA-EngB-Septin-like GTPase superfamily. TrmE GTPase family. In terms of assembly, homodimer. Heterotetramer of two MnmE and two MnmG subunits. The cofactor is K(+).

It localises to the cytoplasm. Its function is as follows. Exhibits a very high intrinsic GTPase hydrolysis rate. Involved in the addition of a carboxymethylaminomethyl (cmnm) group at the wobble position (U34) of certain tRNAs, forming tRNA-cmnm(5)s(2)U34. This chain is tRNA modification GTPase MnmE, found in Lachnoclostridium phytofermentans (strain ATCC 700394 / DSM 18823 / ISDg) (Clostridium phytofermentans).